Consider the following 531-residue polypeptide: Pyruvate kinase (531 aa).

Arg86 provides a ligand contact to substrate. Positions 88, 90, 121, and 122 each coordinate K(+). ATP is bound at residue 88 to 91 (NFSH). Arg128 and Lys211 together coordinate ATP. Residue Glu277 coordinates Mg(2+). Residues Gly300, Asp301, and Thr333 each contribute to the substrate site. Residue Asp301 participates in Mg(2+) binding.

Belongs to the pyruvate kinase family. Homotetramer. Mg(2+) serves as cofactor. K(+) is required as a cofactor.

It catalyses the reaction pyruvate + ATP = phosphoenolpyruvate + ADP + H(+). It functions in the pathway carbohydrate degradation; glycolysis; pyruvate from D-glyceraldehyde 3-phosphate: step 5/5. The sequence is that of Pyruvate kinase (PYK) from Eimeria tenella (Coccidian parasite).